A 356-amino-acid chain; its full sequence is sn-glycerol-3-phosphate import ATP-binding protein UgpC (356 aa).

Residues 4–235 (LKLQAVTKSW…PASLFVASFI (232 aa)) form the ABC transporter domain. Residue 37 to 44 (GPSGCGKS) coordinates ATP.

This sequence belongs to the ABC transporter superfamily. sn-glycerol-3-phosphate importer (TC 3.A.1.1.3) family. In terms of assembly, the complex is composed of two ATP-binding proteins (UgpC), two transmembrane proteins (UgpA and UgpE) and a solute-binding protein (UgpB).

It is found in the cell inner membrane. It carries out the reaction sn-glycerol 3-phosphate(out) + ATP + H2O = sn-glycerol 3-phosphate(in) + ADP + phosphate + H(+). Functionally, part of the ABC transporter complex UgpBAEC involved in sn-glycerol-3-phosphate (G3P) import. Responsible for energy coupling to the transport system. This chain is sn-glycerol-3-phosphate import ATP-binding protein UgpC, found in Escherichia coli O6:H1 (strain CFT073 / ATCC 700928 / UPEC).